The sequence spans 178 residues: Protein GrpE (178 aa).

A disordered region spans residues 1–22 (MSENQNPSPSPEEIEAAMSANA).

The protein belongs to the GrpE family. As to quaternary structure, homodimer.

Its subcellular location is the cytoplasm. Functionally, participates actively in the response to hyperosmotic and heat shock by preventing the aggregation of stress-denatured proteins, in association with DnaK and GrpE. It is the nucleotide exchange factor for DnaK and may function as a thermosensor. Unfolded proteins bind initially to DnaJ; upon interaction with the DnaJ-bound protein, DnaK hydrolyzes its bound ATP, resulting in the formation of a stable complex. GrpE releases ADP from DnaK; ATP binding to DnaK triggers the release of the substrate protein, thus completing the reaction cycle. Several rounds of ATP-dependent interactions between DnaJ, DnaK and GrpE are required for fully efficient folding. The sequence is that of Protein GrpE from Acidovorax ebreus (strain TPSY) (Diaphorobacter sp. (strain TPSY)).